The chain runs to 182 residues: Transcription repressor OFP11 (182 aa).

The disordered stretch occupies residues 62-94; sequence PLHRRHSSENPAGVFSTNRREEEEEDETTTSVS. The OVATE domain maps to 104-169; the sequence is MKHIESPDPY…VSAFADTLLW (66 aa).

Expressed in roots, rosette and cauline leaves, shoots, stems, flower buds and siliques.

The protein localises to the nucleus. Functionally, transcriptional repressor that may regulate multiple aspects of plant growth and development through the regulation of BEL1-LIKE (BLH) and KNOX TALE (KNAT) homeodomain transcription factors. The polypeptide is Transcription repressor OFP11 (OFP11) (Arabidopsis thaliana (Mouse-ear cress)).